A 968-amino-acid chain; its full sequence is RNA polymerase-associated protein RapA (968 aa).

Positions 164 to 334 constitute a Helicase ATP-binding domain; that stretch reads DVGRRHAPRV…FARLRLLDPD (171 aa). 177–184 contributes to the ATP binding site; that stretch reads DEVGLGKT. The short motif at 280–283 is the DEAH box element; that stretch reads DEAH. A Helicase C-terminal domain is found at 490-643; that stretch reads RVEWLMGYLT…HTCPTGRAVY (154 aa).

This sequence belongs to the SNF2/RAD54 helicase family. RapA subfamily. As to quaternary structure, interacts with the RNAP. Has a higher affinity for the core RNAP than for the holoenzyme. Its ATPase activity is stimulated by binding to RNAP.

Functionally, transcription regulator that activates transcription by stimulating RNA polymerase (RNAP) recycling in case of stress conditions such as supercoiled DNA or high salt concentrations. Probably acts by releasing the RNAP, when it is trapped or immobilized on tightly supercoiled DNA. Does not activate transcription on linear DNA. Probably not involved in DNA repair. In Erwinia tasmaniensis (strain DSM 17950 / CFBP 7177 / CIP 109463 / NCPPB 4357 / Et1/99), this protein is RNA polymerase-associated protein RapA.